We begin with the raw amino-acid sequence, 83 residues long: Cytochrome b559 subunit alpha (83 aa).

Residues 21-35 (VIHSITIPSLFIAGW) form a helical membrane-spanning segment. Histidine 23 contacts heme.

Belongs to the PsbE/PsbF family. In terms of assembly, heterodimer of an alpha subunit and a beta subunit. PSII is composed of 1 copy each of membrane proteins PsbA, PsbB, PsbC, PsbD, PsbE, PsbF, PsbH, PsbI, PsbJ, PsbK, PsbL, PsbM, PsbT, PsbX, PsbY, PsbZ, Psb30/Ycf12, at least 3 peripheral proteins of the oxygen-evolving complex and a large number of cofactors. It forms dimeric complexes. The cofactor is heme b.

It localises to the plastid. It is found in the chloroplast thylakoid membrane. Its function is as follows. This b-type cytochrome is tightly associated with the reaction center of photosystem II (PSII). PSII is a light-driven water:plastoquinone oxidoreductase that uses light energy to abstract electrons from H(2)O, generating O(2) and a proton gradient subsequently used for ATP formation. It consists of a core antenna complex that captures photons, and an electron transfer chain that converts photonic excitation into a charge separation. In Phalaenopsis aphrodite subsp. formosana (Moth orchid), this protein is Cytochrome b559 subunit alpha.